We begin with the raw amino-acid sequence, 130 residues long: Immunoglobulin kappa chain variable 9-120 (130 aa).

Residues 1-22 (MDMRAPAQIFGFLLLLFQGTRC) form the signal peptide. Positions 23 to 45 (DIQMTQSPSSLSASLGERVSLTC) are framework-1. C45 and C110 are disulfide-bonded. The complementarity-determining-1 stretch occupies residues 46-56 (RASQDIGSSLN). A framework-2 region spans residues 57–71 (WLQQEPDGTIKRLIY). The interval 72-78 (ATSSLDS) is complementarity-determining-2. The interval 79–110 (GVPKRFSGSRSGSDYSLTISSLESEDFVDYYC) is framework-3. The complementarity-determining-3 stretch occupies residues 111–119 (LQYASSPWT). Residues 120-129 (FGGGTKLEIK) form a framework-4 region.

This chain is Immunoglobulin kappa chain variable 9-120, found in Mus musculus (Mouse).